The following is a 350-amino-acid chain: MSEANLTECELAYQLTYHPFYMIAQFWSFFVSLLAMPSLIFFMVEKVFKLPFHGNLKFLLVSYFIGTFLFASIICFTFGYHFFVPFFVTSNCDLIINATLFKYGHMIALIFMTIPMILPTAFTVERFVALKMAHSYEHVRTLLGPVLVLVVIAIDSMFLYDIYGQEKFDKPFINFILVPATSALQFNSFLWYMLYLKITNFICNLILLFIHKILHQSSRYRRKNVSLSVKYEMQEISQSSRFTLIVTFTHLLFFGWYVSTILLIRTVGPDFFRGFINYTVMRGVYCATPTYNLVIVFIGFKALNHLNFKRNNKVQSTIQIKSTGQEGAENYDNAISNYWDSVYTMNKSKL.

Topologically, residues 1 to 21 (MSEANLTECELAYQLTYHPFY) are extracellular. N5 is a glycosylation site (N-linked (GlcNAc...) asparagine). The chain crosses the membrane as a helical span at residues 22 to 42 (MIAQFWSFFVSLLAMPSLIFF). Topologically, residues 43–57 (MVEKVFKLPFHGNLK) are cytoplasmic. The helical transmembrane segment at 58-78 (FLLVSYFIGTFLFASIICFTF) threads the bilayer. Residues 79-103 (GYHFFVPFFVTSNCDLIINATLFKY) are Extracellular-facing. N97 carries N-linked (GlcNAc...) asparagine glycosylation. Residues 104 to 124 (GHMIALIFMTIPMILPTAFTV) traverse the membrane as a helical segment. Over 125-141 (ERFVALKMAHSYEHVRT) the chain is Cytoplasmic. The helical transmembrane segment at 142–162 (LLGPVLVLVVIAIDSMFLYDI) threads the bilayer. Residues 163–189 (YGQEKFDKPFINFILVPATSALQFNSF) are Extracellular-facing. Residues 190–210 (LWYMLYLKITNFICNLILLFI) traverse the membrane as a helical segment. Over 211-243 (HKILHQSSRYRRKNVSLSVKYEMQEISQSSRFT) the chain is Cytoplasmic. The helical transmembrane segment at 244–264 (LIVTFTHLLFFGWYVSTILLI) threads the bilayer. Over 265 to 282 (RTVGPDFFRGFINYTVMR) the chain is Extracellular. N-linked (GlcNAc...) asparagine glycosylation occurs at N277. The helical transmembrane segment at 283-303 (GVYCATPTYNLVIVFIGFKAL) threads the bilayer. The Cytoplasmic segment spans residues 304-350 (NHLNFKRNNKVQSTIQIKSTGQEGAENYDNAISNYWDSVYTMNKSKL).

It belongs to the nematode receptor-like protein srb family. As to expression, expressed throughout the head.

The protein localises to the cell membrane. It localises to the perikaryon. It is found in the cell projection. Its subcellular location is the dendrite. Its function is as follows. G-protein coupled receptor. Plays a role in the navigational capacity of sperm and promotes the targeting of sperm derived from males to the fertilization site in the uterus of hermaphrodites. This chain is Serpentine receptor class beta-12, found in Caenorhabditis elegans.